Consider the following 224-residue polypeptide: 7-cyano-7-deazaguanine synthase (224 aa).

9-19 (ISGGMDSTLCA) contacts ATP. C190, C198, C201, and C204 together coordinate Zn(2+).

It belongs to the QueC family. Zn(2+) is required as a cofactor.

It catalyses the reaction 7-carboxy-7-deazaguanine + NH4(+) + ATP = 7-cyano-7-deazaguanine + ADP + phosphate + H2O + H(+). It participates in purine metabolism; 7-cyano-7-deazaguanine biosynthesis. Catalyzes the ATP-dependent conversion of 7-carboxy-7-deazaguanine (CDG) to 7-cyano-7-deazaguanine (preQ(0)). The polypeptide is 7-cyano-7-deazaguanine synthase (Campylobacter jejuni subsp. jejuni serotype O:6 (strain 81116 / NCTC 11828)).